The following is a 238-amino-acid chain: Transcription factor MYB27 (238 aa).

2 consecutive HTH myb-type domains span residues 6-58 and 59-113; these read EETL…MNYL and NPTL…RKKQ. The short motif at 31-38 is the Nuclear localization signal element; the sequence is ERRWDSLA. 2 consecutive DNA-binding regions (H-T-H motif) follow at residues 34–58 and 86–109; these read WDSLAIVSGLKRSGKSCRLRWMNYL and WSKIARRLPGRTDNEIKNYWRTHY.

It localises to the nucleus. The sequence is that of Transcription factor MYB27 from Arabidopsis thaliana (Mouse-ear cress).